The primary structure comprises 293 residues: Ribosomal protein L11 methyltransferase (293 aa).

Positions 145, 166, 188, and 230 each coordinate S-adenosyl-L-methionine.

The protein belongs to the methyltransferase superfamily. PrmA family.

The protein localises to the cytoplasm. The catalysed reaction is L-lysyl-[protein] + 3 S-adenosyl-L-methionine = N(6),N(6),N(6)-trimethyl-L-lysyl-[protein] + 3 S-adenosyl-L-homocysteine + 3 H(+). In terms of biological role, methylates ribosomal protein L11. The polypeptide is Ribosomal protein L11 methyltransferase (Shewanella baltica (strain OS155 / ATCC BAA-1091)).